The following is a 242-amino-acid chain: Ubiquitin-conjugating enzyme E2 6 (242 aa).

The Cytoplasmic portion of the chain corresponds to 1-217; sequence MASRQAYKRL…QPAGNGTTSN (217 aa). A UBC core domain is found at 5 to 163; sequence QAYKRLSKEY…FPELAEQNRR (159 aa). Catalysis depends on cysteine 87, which acts as the Glycyl thioester intermediate. The chain crosses the membrane as a helical span at residues 218 to 240; that stretch reads SIGRSLLFVLFSLAALLVAVCYT.

This sequence belongs to the ubiquitin-conjugating enzyme family.

The protein localises to the endoplasmic reticulum membrane. The catalysed reaction is S-ubiquitinyl-[E1 ubiquitin-activating enzyme]-L-cysteine + [E2 ubiquitin-conjugating enzyme]-L-cysteine = [E1 ubiquitin-activating enzyme]-L-cysteine + S-ubiquitinyl-[E2 ubiquitin-conjugating enzyme]-L-cysteine.. It functions in the pathway protein modification; protein ubiquitination. Its function is as follows. Catalyzes the covalent attachment of ubiquitin to other proteins. Functions in degradation of misfolded or regulated proteins localized in the endoplasmic reticulum (ER) lumen or membrane via the ubiquitin-proteasome system. Cognate E2 conjugating enzyme for the DOA10 ubiquitin ligase complex, which is part of the ERAD-C pathway responsible for the rapid degradation of membrane proteins with misfolded cytoplasmic domains. This Eremothecium gossypii (strain ATCC 10895 / CBS 109.51 / FGSC 9923 / NRRL Y-1056) (Yeast) protein is Ubiquitin-conjugating enzyme E2 6 (UBC6).